The primary structure comprises 444 residues: Methylenetetrahydrofolate--tRNA-(uracil-5-)-methyltransferase TrmFO (444 aa).

Residue 9-14 (GAGLAG) coordinates FAD.

Belongs to the MnmG family. TrmFO subfamily. It depends on FAD as a cofactor.

The protein resides in the cytoplasm. It carries out the reaction uridine(54) in tRNA + (6R)-5,10-methylene-5,6,7,8-tetrahydrofolate + NADH + H(+) = 5-methyluridine(54) in tRNA + (6S)-5,6,7,8-tetrahydrofolate + NAD(+). The enzyme catalyses uridine(54) in tRNA + (6R)-5,10-methylene-5,6,7,8-tetrahydrofolate + NADPH + H(+) = 5-methyluridine(54) in tRNA + (6S)-5,6,7,8-tetrahydrofolate + NADP(+). Catalyzes the folate-dependent formation of 5-methyl-uridine at position 54 (M-5-U54) in all tRNAs. In Koribacter versatilis (strain Ellin345), this protein is Methylenetetrahydrofolate--tRNA-(uracil-5-)-methyltransferase TrmFO.